The sequence spans 161 residues: uncharacterized protein (161 aa).

The RING-type zinc-finger motif lies at Cys-72–Arg-134. Positions Asp-140 to Gly-161 are disordered.

This is an uncharacterized protein from Caenorhabditis elegans.